A 172-amino-acid chain; its full sequence is Disulfide bond formation protein B (172 aa).

Residues 1–13 are Cytoplasmic-facing; that stretch reads MIIRLAGMSVRQG. The chain crosses the membrane as a helical span at residues 14–30; it reads CLLGLLMCALMMGVALV. Residues 31 to 48 lie on the Periplasmic side of the membrane; that stretch reads LQYVYGLTPCPLCIGQRI. The cysteines at positions 40 and 43 are disulfide-linked. Residues 49-65 form a helical membrane-spanning segment; the sequence is AVLLAAFVFAIGALHNP. Over 66-72 the chain is Cytoplasmic; that stretch reads AGNLGRG. A helical membrane pass occupies residues 73–90; it reads LYAGLAALASVLGLAVAA. The Periplasmic portion of the chain corresponds to 91 to 147; it reads RHVWLQSLPPENVPSCGPGLDYMMEVLPLWDVLSRVLAGSGECAEIHGSLLGMSIPQ. C106 and C133 are disulfide-bonded. A helical membrane pass occupies residues 148–166; the sequence is WTLLGFAVLLLIPLGMLAG. Over 167–172 the chain is Cytoplasmic; sequence IVIRRR.

Belongs to the DsbB family.

The protein localises to the cell inner membrane. Functionally, required for disulfide bond formation in some periplasmic proteins. Acts by oxidizing the DsbA protein. The chain is Disulfide bond formation protein B from Chromohalobacter salexigens (strain ATCC BAA-138 / DSM 3043 / CIP 106854 / NCIMB 13768 / 1H11).